The following is a 179-amino-acid chain: Translation initiation factor IF-3 (179 aa).

The protein belongs to the IF-3 family. Monomer.

It localises to the cytoplasm. Functionally, IF-3 binds to the 30S ribosomal subunit and shifts the equilibrium between 70S ribosomes and their 50S and 30S subunits in favor of the free subunits, thus enhancing the availability of 30S subunits on which protein synthesis initiation begins. The sequence is that of Translation initiation factor IF-3 from Bradyrhizobium diazoefficiens (strain JCM 10833 / BCRC 13528 / IAM 13628 / NBRC 14792 / USDA 110).